A 1011-amino-acid chain; its full sequence is Liprin-beta-1 (1011 aa).

Ser-37 carries the phosphoserine modification. Residue Thr-39 is modified to Phosphothreonine. Ser-40 bears the Phosphoserine mark. Positions 156 to 405 form a coiled coil; sequence QQELLSRTSL…VPEEFHTTIL (250 aa). Lys-322 carries the N6-acetyllysine modification. 2 disordered regions span residues 420–439 and 463–634; these read ETSE…EEND and KSSS…RDLG. Residues Ser-434 and Ser-466 each carry the phosphoserine modification. Residues 470-492 are compositionally biased toward basic and acidic residues; it reads LKKETSDGEKETIQKTSEDRAPA. Lys-471 participates in a covalent cross-link: Glycyl lysine isopeptide (Lys-Gly) (interchain with G-Cter in SUMO2). Phosphoserine occurs at positions 523 and 540. Basic and acidic residues predominate over residues 546-556; the sequence is ETEKETAEHLD. Residue Ser-579 is modified to Phosphoserine. Positions 584–598 are enriched in basic residues; sequence KKSRGIMKLFGKLRR. A phosphoserine mark is found at Ser-601 and Ser-636. SAM domains follow at residues 647 to 711 and 719 to 782; these read WTKE…LGSE and LDFN…LRIN. Ser-794 is subject to Phosphoserine. The region spanning 804–876 is the SAM 3 domain; that stretch reads VQKWTNHRVM…ATHFNLLIGA (73 aa). Phosphoserine is present on residues Ser-999, Ser-1001, and Ser-1003. Thr-1005 carries the phosphothreonine modification.

Belongs to the liprin family. Liprin-beta subfamily. As to quaternary structure, forms homodimers and heterodimers. Interacts with S100A4 in a Ca(2+)-dependent mode. Part of a cortical microtubule stabilization complex (CMSC) composed of KANK1, PPFIA1, PPFIBP1, ERC1/ELKS, PHLDB2/LL5beta, CLASPs, KIF21A and possibly additional interactors; within CMSCs KANK1 and PHLDB2/LL5beta seem to be the core components for recruiting microtubule-binding proteins KIF21A and CLASPs, whereas PPFIA1, PPFIBP1 and ERC1/ELKS serve as scaffolds for protein clustering. Interacts with KANK1 (via CC1 domain, residues 244-339). In terms of tissue distribution, widely expressed. Absent in liver.

Its subcellular location is the cytoplasm. It is found in the cell cortex. Its function is as follows. May regulate the disassembly of focal adhesions. Did not bind receptor-like tyrosine phosphatases type 2A. The protein is Liprin-beta-1 (PPFIBP1) of Homo sapiens (Human).